The following is a 695-amino-acid chain: Potassium voltage-gated channel subfamily KQT member 4 (695 aa).

The interval 1–21 is disordered; that stretch reads MAEAPPRRLGLGPPPGDAPRA. The Cytoplasmic portion of the chain corresponds to 1–96; sequence MAEAPPRRLG…VYNVLERPRG (96 aa). Residue Arg-93 coordinates a 1,2-diacyl-sn-glycero-3-phospho-(1D-myo-inositol-4,5-bisphosphate). The chain crosses the membrane as a helical span at residues 97 to 118; sequence WAFVYHVFIFLLVFSCLVLSVL. At 119 to 129 the chain is on the extracellular side; the sequence is STIQEHQELAN. A helical transmembrane segment spans residues 130–152; it reads ECLLILEFVMIVVFGLEYIIRVW. Topologically, residues 153-168 are cytoplasmic; it reads SAGCCCRYRGWQGRFR. The chain crosses the membrane as a helical span at residues 169 to 191; it reads FARKPFCVIDFIVFVASVAVIAA. Lys-172 provides a ligand contact to a 1,2-diacyl-sn-glycero-3-phospho-(1D-myo-inositol-4,5-bisphosphate). The Extracellular portion of the chain corresponds to 192-202; it reads GTQGNIFATSA. The helical; Voltage-sensor transmembrane segment at 203 to 223 threads the bilayer; it reads LRSMRFLQILRMVRMDRRGGT. Residues Arg-219, Arg-220, Lys-225, and Ser-235 each coordinate a 1,2-diacyl-sn-glycero-3-phospho-(1D-myo-inositol-4,5-bisphosphate). Topologically, residues 224-235 are cytoplasmic; it reads WKLLGSVVYAHS. A helical membrane pass occupies residues 236 to 258; it reads KELITAWYIGFLVLIFASFLVYL. The Extracellular portion of the chain corresponds to 259-270; sequence AEKDANSDFSSY. Positions 271 to 292 form an intramembrane region, pore-forming; the sequence is ADSLWWGTITLTTIGYGDKTPH. Residue Thr-293 is a topological domain, extracellular. Residues 294-322 traverse the membrane as a helical segment; that stretch reads WLGRVLAAGFALLGISFFALPAGILGSGF. Residues 323–695 are Cytoplasmic-facing; sequence ALKVQEQHRQ…ISRSVSTNMD (373 aa). His-330 and Lys-333 together coordinate a 1,2-diacyl-sn-glycero-3-phospho-(1D-myo-inositol-4,5-bisphosphate). Positions 342–351 are interaction with CALM; the sequence is AANLIQAAWR. Positions 441–483 are disordered; the sequence is RMSSSQKRTGPSKQHLAPPPIPTSPSSEQVGEASSPSKVQKSW. 2 stretches are compositionally biased toward polar residues: residues 442–452 and 464–483; these read MSSSQKRTGPS and SPSS…QKSW. The interaction with CALM stretch occupies residues 535–549; the sequence is RSVRILKFLVAKRKF. The C-terminal assembly domain (tetramerization) stretch occupies residues 546 to 650; the sequence is KRKFKETLRP…SRCLRSGTSA (105 aa). The segment at 588 to 608 is disordered; that stretch reads GRGPGDRKTREKGDKGPSDTE. Basic and acidic residues predominate over residues 591-605; sequence PGDRKTREKGDKGPS.

It belongs to the potassium channel family. KQT (TC 1.A.1.15) subfamily. Kv7.4/KCNQ4 sub-subfamily. As to quaternary structure, homotetramer. Interacts (via C-terminus) with calmodulin; forms a heterooctameric structure (with 4:4 KCNQ1:CALM stoichiometry); the interaction is calcium-independent, constitutive, participates in the proper assembly of a functional channel. The interaction with calcium-free CALM controls channel trafficking whereas interaction with calcium-bound CALM regulates channel gating. May form a functional heteromultimeric channel with KCNQ3. Interacts with HSP90AB1; promotes cell surface expression of KCNQ4. Expressed in both the inner (IHCs) and the outer hair cells (OHCs) of the cochlea. Reciprocal longitudinal gradients of expression is present in IHCs and OHCs. The strongest expression in IHCs is in the base of the cochlea and in the apex for OHCs. A basal to apical gradient of expression is also present in both type I and type II spiral ganglion cells.

The protein resides in the basal cell membrane. It carries out the reaction K(+)(in) = K(+)(out). With respect to regulation, two molecules of phosphatidylinositol-4,5-bisphosphate (PIP2-I and PIP2-II) are essential to activate KCNQ4 channel by inducing the coupling of the voltage-sensing domain (VSD) and the pore-forming domain (PD). Upon channel activation, PIP2-I and PIP2-II disrupt the VSD-calmodulin/CALM interaction, causing the release of CALM from the VSD which triggers the opening of the gate. Calcium suppresses KCNQ4 channel current through calcium-bound CALM C-terminus. Therefore CALM acts as calcium sensor that controls channel activity. Functionally, pore-forming subunit of the voltage-gated potassium (Kv) channel involved in the regulation of sensory cells excitability in the cochlea. KCNQ4/Kv7.4 channel is composed of 4 pore-forming subunits assembled as tetramers. Promotes the outflow of potassium ions in the repolarization phase of action potential which plays a role in regulating membrane potential of excitable cells. The channel conducts a slowly activating and deactivating current. Current often shows some inward rectification at positive potentials. Channel may be selectively permeable in vitro to other cations besides potassium, in decreasing order of affinity K(+) = Rb(+) &gt; Cs(+) &gt; Na(+). Important for normal physiological function of inner ear such as sensory perception of sound. The protein is Potassium voltage-gated channel subfamily KQT member 4 of Rattus norvegicus (Rat).